The sequence spans 148 residues: D-aminoacyl-tRNA deacylase (148 aa).

The Gly-cisPro motif, important for rejection of L-amino acids motif lies at 137 to 138; the sequence is GP.

This sequence belongs to the DTD family. In terms of assembly, homodimer.

Its subcellular location is the cytoplasm. It catalyses the reaction glycyl-tRNA(Ala) + H2O = tRNA(Ala) + glycine + H(+). The catalysed reaction is a D-aminoacyl-tRNA + H2O = a tRNA + a D-alpha-amino acid + H(+). An aminoacyl-tRNA editing enzyme that deacylates mischarged D-aminoacyl-tRNAs. Also deacylates mischarged glycyl-tRNA(Ala), protecting cells against glycine mischarging by AlaRS. Acts via tRNA-based rather than protein-based catalysis; rejects L-amino acids rather than detecting D-amino acids in the active site. By recycling D-aminoacyl-tRNA to D-amino acids and free tRNA molecules, this enzyme counteracts the toxicity associated with the formation of D-aminoacyl-tRNA entities in vivo and helps enforce protein L-homochirality. The chain is D-aminoacyl-tRNA deacylase from Lacticaseibacillus casei (strain BL23) (Lactobacillus casei).